A 134-amino-acid polypeptide reads, in one-letter code: DNA-binding protein inhibitor ID-2 (134 aa).

2 positions are modified to phosphoserine: S14 and S25. Residues S23–L75 enclose the bHLH domain. The Nuclear export signal signature appears at L106–L115.

In terms of assembly, interacts with GATA4 and NKX2-5. Interacts with NR0B2. Interacts with CLOCK and BMAL1. Interacts with IFI204. Interacts with NEDD9/HEF1. Interacts with ASB4; this interaction promotes ID2 proteasomal degradation. In terms of processing, ubiquitinated in a ASB4-depedent manner, leading to proteasomal degradation. Post-translationally, phosphorylated in vitro by CDK1, PKA and PKC. As to expression, highly expressed in early fetal tissues, including those of the central nervous system.

Its subcellular location is the cytoplasm. It localises to the nucleus. In terms of biological role, transcriptional regulator (lacking a basic DNA binding domain) which negatively regulates the basic helix-loop-helix (bHLH) transcription factors by forming heterodimers and inhibiting their DNA binding and transcriptional activity. Implicated in regulating a variety of cellular processes, including cellular growth, senescence, differentiation, apoptosis, angiogenesis, and neoplastic transformation. Inhibits skeletal muscle and cardiac myocyte differentiation. Regulates the circadian clock by repressing the transcriptional activator activity of the CLOCK-BMAL1 heterodimer. Restricts the CLOCK and BMAL1 localization to the cytoplasm. Plays a role in both the input and output pathways of the circadian clock: in the input component, is involved in modulating the magnitude of photic entrainment and in the output component, contributes to the regulation of a variety of liver clock-controlled genes involved in lipid metabolism. The sequence is that of DNA-binding protein inhibitor ID-2 (ID2) from Homo sapiens (Human).